Consider the following 354-residue polypeptide: Small ribosomal subunit biogenesis GTPase RsgA 1 (354 aa).

Basic residues predominate over residues 1 to 24 (MAKKKKLTKGQVRRVRSNQQKRLK). Residues 1-28 (MAKKKKLTKGQVRRVRSNQQKRLKKQEE) form a disordered region. Residues 113-274 (YDGLKPVAAN…LIDSPGVREF (162 aa)) form the CP-type G domain. GTP is bound by residues 160 to 163 (NKVD) and 214 to 222 (GQSGVGKSS). Zn(2+) is bound by residues cysteine 298, cysteine 303, histidine 305, and cysteine 311.

Belongs to the TRAFAC class YlqF/YawG GTPase family. RsgA subfamily. In terms of assembly, monomer. Associates with 30S ribosomal subunit, binds 16S rRNA. Zn(2+) serves as cofactor.

It is found in the cytoplasm. One of several proteins that assist in the late maturation steps of the functional core of the 30S ribosomal subunit. Helps release RbfA from mature subunits. May play a role in the assembly of ribosomal proteins into the subunit. Circularly permuted GTPase that catalyzes slow GTP hydrolysis, GTPase activity is stimulated by the 30S ribosomal subunit. In Vibrio parahaemolyticus serotype O3:K6 (strain RIMD 2210633), this protein is Small ribosomal subunit biogenesis GTPase RsgA 1.